Reading from the N-terminus, the 67-residue chain is Large ribosomal subunit protein bL31 (67 aa).

Zn(2+) contacts are provided by C16, C18, C36, and C39.

It belongs to the bacterial ribosomal protein bL31 family. Type A subfamily. As to quaternary structure, part of the 50S ribosomal subunit. It depends on Zn(2+) as a cofactor.

Its function is as follows. Binds the 23S rRNA. The protein is Large ribosomal subunit protein bL31 of Desulforudis audaxviator (strain MP104C).